Here is a 255-residue protein sequence, read N- to C-terminus: Proteasome subunit alpha (255 aa).

The interval 224-255 (RLEELLGERGPAQHAPEEPADPEPEPPIAPPG) is disordered.

The protein belongs to the peptidase T1A family. As to quaternary structure, the 20S proteasome core is composed of 14 alpha and 14 beta subunits that assemble into four stacked heptameric rings, resulting in a barrel-shaped structure. The two inner rings, each composed of seven catalytic beta subunits, are sandwiched by two outer rings, each composed of seven alpha subunits. The catalytic chamber with the active sites is on the inside of the barrel. Has a gated structure, the ends of the cylinder being occluded by the N-termini of the alpha-subunits. Is capped by the proteasome-associated ATPase, ARC.

It localises to the cytoplasm. It participates in protein degradation; proteasomal Pup-dependent pathway. With respect to regulation, the formation of the proteasomal ATPase ARC-20S proteasome complex, likely via the docking of the C-termini of ARC into the intersubunit pockets in the alpha-rings, may trigger opening of the gate for substrate entry. Interconversion between the open-gate and close-gate conformations leads to a dynamic regulation of the 20S proteasome proteolysis activity. Its function is as follows. Component of the proteasome core, a large protease complex with broad specificity involved in protein degradation. The chain is Proteasome subunit alpha from Nocardioides sp. (strain ATCC BAA-499 / JS614).